Reading from the N-terminus, the 385-residue chain is Probable tRNA sulfurtransferase (385 aa).

In terms of domain architecture, THUMP spans 57–160; sequence DGVIERVKKV…RGNAYVFTDK (104 aa). Residues 180–181, 205–206, R262, G284, and Q293 contribute to the ATP site; these read ML and YY.

The protein belongs to the ThiI family.

The protein localises to the cytoplasm. It catalyses the reaction [ThiI sulfur-carrier protein]-S-sulfanyl-L-cysteine + a uridine in tRNA + 2 reduced [2Fe-2S]-[ferredoxin] + ATP + H(+) = [ThiI sulfur-carrier protein]-L-cysteine + a 4-thiouridine in tRNA + 2 oxidized [2Fe-2S]-[ferredoxin] + AMP + diphosphate. The catalysed reaction is [ThiS sulfur-carrier protein]-C-terminal Gly-Gly-AMP + S-sulfanyl-L-cysteinyl-[cysteine desulfurase] + AH2 = [ThiS sulfur-carrier protein]-C-terminal-Gly-aminoethanethioate + L-cysteinyl-[cysteine desulfurase] + A + AMP + 2 H(+). Its pathway is cofactor biosynthesis; thiamine diphosphate biosynthesis. Its function is as follows. Catalyzes the ATP-dependent transfer of a sulfur to tRNA to produce 4-thiouridine in position 8 of tRNAs, which functions as a near-UV photosensor. Also catalyzes the transfer of sulfur to the sulfur carrier protein ThiS, forming ThiS-thiocarboxylate. This is a step in the synthesis of thiazole, in the thiamine biosynthesis pathway. The sulfur is donated as persulfide by IscS. This Clostridium perfringens (strain ATCC 13124 / DSM 756 / JCM 1290 / NCIMB 6125 / NCTC 8237 / Type A) protein is Probable tRNA sulfurtransferase.